The sequence spans 155 residues: S-ribosylhomocysteine lyase (155 aa).

Fe cation contacts are provided by H58, H62, and C125.

Belongs to the LuxS family. In terms of assembly, homodimer. The cofactor is Fe cation.

The catalysed reaction is S-(5-deoxy-D-ribos-5-yl)-L-homocysteine = (S)-4,5-dihydroxypentane-2,3-dione + L-homocysteine. Involved in the synthesis of autoinducer 2 (AI-2) which is secreted by bacteria and is used to communicate both the cell density and the metabolic potential of the environment. The regulation of gene expression in response to changes in cell density is called quorum sensing. Catalyzes the transformation of S-ribosylhomocysteine (RHC) to homocysteine (HC) and 4,5-dihydroxy-2,3-pentadione (DPD). This chain is S-ribosylhomocysteine lyase, found in Helicobacter pylori (strain HPAG1).